The chain runs to 332 residues: NADH-quinone oxidoreductase subunit H (332 aa).

The next 8 helical transmembrane spans lie at 11-31, 77-97, 110-130, 156-176, 182-202, 240-260, 268-288, and 307-327; these read TYKILFLLVPVLVSVAMIVWL, VIFILAPIVTMTLALVSWAVI, VGVLYLFAVSSLGVYGIIMGG, IGVIIINVLLCVGSLNLNDII, LWFIIPLFPMFVIFFISALAE, NILLMCAMGSILFLGGWLSPI, IPGAIWMIFKILFLFVLFALV, and IFLPLSLTWVVLTASYLFYFN.

It belongs to the complex I subunit 1 family. In terms of assembly, NDH-1 is composed of 14 different subunits. Subunits NuoA, H, J, K, L, M, N constitute the membrane sector of the complex.

The protein resides in the cell inner membrane. The catalysed reaction is a quinone + NADH + 5 H(+)(in) = a quinol + NAD(+) + 4 H(+)(out). Functionally, NDH-1 shuttles electrons from NADH, via FMN and iron-sulfur (Fe-S) centers, to quinones in the respiratory chain. The immediate electron acceptor for the enzyme in this species is believed to be ubiquinone. Couples the redox reaction to proton translocation (for every two electrons transferred, four hydrogen ions are translocated across the cytoplasmic membrane), and thus conserves the redox energy in a proton gradient. This subunit may bind ubiquinone. The chain is NADH-quinone oxidoreductase subunit H from Pelagibacter ubique (strain HTCC1062).